Consider the following 235-residue polypeptide: Pre-mRNA-splicing factor ISY1 (235 aa).

It belongs to the ISY1 family. In terms of assembly, belongs to the NTC complex (or PRP19-associated complex), composed of at least CEF1, CLF1, ISY1, NTC20, SNT309, SYF1, SYF2, and PRP19. The NTC complex associates with the spliceosome after the release of the U1 and U4 snRNAs and forms the CWC spliceosome subcomplex (or CEF1-associated complex) reminiscent of a late-stage spliceosome composed also of the U2, U5 and U6 snRNAs and at least BUD13, BUD31, BRR2, CDC40, CUS1, CWC2, CWC15, CWC21, CWC22, CWC23, CWC24, CWC25, CWC27, ECM2, HSH155, IST3, LEA1, MSL1, PRP8, PRP9, PRP11, PRP21, PRP22, PRP45, PRP46, SLU7, SMB1, SMD1, SMD2, SMD3, SMX2, SMX3, SNU114, SPP2, RSE1 and YJU2. Interacts with CEF1, CWC2, CLF1, and SYF1.

The protein resides in the cytoplasm. It is found in the nucleus. In terms of biological role, involved in pre-mRNA splicing and cell cycle control. As a component of the NTC complex (or PRP19-associated complex), associates to the spliceosome to mediate conformational rearrangement or to stabilize the structure of the spliceosome after U4 snRNA dissociation, which leads to spliceosome maturation. The cell cycle arrest of SYF2 defective cells may be due to the inefficient splicing of TUB1. Also involved in DNA repair. The chain is Pre-mRNA-splicing factor ISY1 (ISY1) from Saccharomyces cerevisiae (strain ATCC 204508 / S288c) (Baker's yeast).